A 406-amino-acid chain; its full sequence is MTFSVDKVRADFPVLSREVNGLPLAYLDSAASAQKPSQVIDSEAEFYRHGYAAVHRGIHTLSAQATEKMENVRKRASLFINARSAEELVFVRGTTEGINLVANSWGNSNVRAGDNIIISQMEHHANIVPWQMLCARVGAELRVIPLNPDGTLQLETLPTLFDEKTRLLAITHVSNVLGTENPLAEMITLAHQHGAKVLVDGAQAVMHHPVHVQALDCDFYVFSGHKLYGPTGIGILYVKEALLQEMPPWEGGGSMIATVSLSEGTTWTKAPWRFEAGTPNTGGIIGLGAALEYVSALGLNSIAEYEQNLMHYALSQLESVPDLTLYGPQNRLGVIAFNLGKHHAYDVGSFLDNYGIAVRTGHHCAMPLMAYYNVPAMCRASLAMYNTHEEVDRLVTGLQRIHRLLG.

N6-(pyridoxal phosphate)lysine is present on lysine 226. The active-site Cysteine persulfide intermediate is cysteine 364.

It belongs to the class-V pyridoxal-phosphate-dependent aminotransferase family. Csd subfamily. In terms of assembly, homodimer. Interacts with SufE and the SufBCD complex composed of SufB, SufC and SufD. The interaction with SufE is required to mediate the direct transfer of the sulfur atom from the S-sulfanylcysteine. The cofactor is pyridoxal 5'-phosphate.

Its subcellular location is the cytoplasm. The enzyme catalyses (sulfur carrier)-H + L-cysteine = (sulfur carrier)-SH + L-alanine. It carries out the reaction L-selenocysteine + AH2 = hydrogenselenide + L-alanine + A + H(+). It functions in the pathway cofactor biosynthesis; iron-sulfur cluster biosynthesis. Cysteine desulfurases mobilize the sulfur from L-cysteine to yield L-alanine, an essential step in sulfur metabolism for biosynthesis of a variety of sulfur-containing biomolecules. Component of the suf operon, which is activated and required under specific conditions such as oxidative stress and iron limitation. Acts as a potent selenocysteine lyase in vitro, that mobilizes selenium from L-selenocysteine. Selenocysteine lyase activity is however unsure in vivo. In Escherichia coli O139:H28 (strain E24377A / ETEC), this protein is Cysteine desulfurase.